Consider the following 191-residue polypeptide: Glutathione-dependent formaldehyde-activating enzyme (191 aa).

One can recognise a CENP-V/GFA domain in the interval 22–169; it reads FQGGTLECHC…LTELGLPPYD (148 aa). Cysteine 29, cysteine 31, cysteine 50, cysteine 52, cysteine 55, cysteine 97, and cysteine 100 together coordinate Zn(2+).

It belongs to the Gfa family. Zn(2+) serves as cofactor.

It carries out the reaction S-(hydroxymethyl)glutathione = glutathione + formaldehyde. It functions in the pathway one-carbon metabolism; formaldehyde degradation; formate from formaldehyde (glutathione route): step 1/3. In terms of biological role, catalyzes the condensation of formaldehyde and glutathione to S-hydroxymethylglutathione. The chain is Glutathione-dependent formaldehyde-activating enzyme from Xanthomonas axonopodis pv. citri (strain 306).